We begin with the raw amino-acid sequence, 206 residues long: ATP phosphoribosyltransferase (206 aa).

This sequence belongs to the ATP phosphoribosyltransferase family. Short subfamily. In terms of assembly, heteromultimer composed of HisG and HisZ subunits.

It is found in the cytoplasm. It catalyses the reaction 1-(5-phospho-beta-D-ribosyl)-ATP + diphosphate = 5-phospho-alpha-D-ribose 1-diphosphate + ATP. Its pathway is amino-acid biosynthesis; L-histidine biosynthesis; L-histidine from 5-phospho-alpha-D-ribose 1-diphosphate: step 1/9. Its function is as follows. Catalyzes the condensation of ATP and 5-phosphoribose 1-diphosphate to form N'-(5'-phosphoribosyl)-ATP (PR-ATP). Has a crucial role in the pathway because the rate of histidine biosynthesis seems to be controlled primarily by regulation of HisG enzymatic activity. The protein is ATP phosphoribosyltransferase of Thermus thermophilus (strain ATCC 27634 / DSM 579 / HB8).